The primary structure comprises 393 residues: NAD(P)H-quinone oxidoreductase subunit H, chloroplastic (393 aa).

This sequence belongs to the complex I 49 kDa subunit family. As to quaternary structure, NDH is composed of at least 16 different subunits, 5 of which are encoded in the nucleus.

The protein resides in the plastid. It localises to the chloroplast thylakoid membrane. The catalysed reaction is a plastoquinone + NADH + (n+1) H(+)(in) = a plastoquinol + NAD(+) + n H(+)(out). The enzyme catalyses a plastoquinone + NADPH + (n+1) H(+)(in) = a plastoquinol + NADP(+) + n H(+)(out). NDH shuttles electrons from NAD(P)H:plastoquinone, via FMN and iron-sulfur (Fe-S) centers, to quinones in the photosynthetic chain and possibly in a chloroplast respiratory chain. The immediate electron acceptor for the enzyme in this species is believed to be plastoquinone. Couples the redox reaction to proton translocation, and thus conserves the redox energy in a proton gradient. The chain is NAD(P)H-quinone oxidoreductase subunit H, chloroplastic from Manihot esculenta (Cassava).